Consider the following 545-residue polypeptide: Chaperonin GroEL 2 (545 aa).

ATP is bound by residues 30 to 33 (TLGP), Lys-51, 87 to 91 (DGTTT), Gly-415, 479 to 481 (NAA), and Asp-495.

The protein belongs to the chaperonin (HSP60) family. Forms a cylinder of 14 subunits composed of two heptameric rings stacked back-to-back. Interacts with the co-chaperonin GroES.

Its subcellular location is the cytoplasm. It carries out the reaction ATP + H2O + a folded polypeptide = ADP + phosphate + an unfolded polypeptide.. Together with its co-chaperonin GroES, plays an essential role in assisting protein folding. The GroEL-GroES system forms a nano-cage that allows encapsulation of the non-native substrate proteins and provides a physical environment optimized to promote and accelerate protein folding. This Escherichia coli O1:K1 / APEC protein is Chaperonin GroEL 2.